We begin with the raw amino-acid sequence, 683 residues long: Transforming growth factor-beta-induced protein ig-h3 (683 aa).

Positions 1–23 (MALLMRLLTLALALSVGPAGTLA) are cleaved as a signal peptide. Ser37 carries the post-translational modification Phosphoserine. Positions 45–99 (GPNVCAVQKVIGTNKKYFTNCKQWYQRKICGKSTVISYECCPGYEKVPGEKGCPA) constitute an EMI domain. Disulfide bonds link Cys49/Cys85, Cys74/Cys339, Cys84/Cys97, Cys214/Cys317, and Cys473/Cys478. The residue at position 65 (Cys65) is an S-cysteinyl cysteine. 4 consecutive FAS1 domains span residues 103 to 236 (LSNL…DKVI), 240 to 371 (TNNI…DELL), 375 to 498 (SAKT…DRML), and 502 to 632 (MGTV…NTVL). The Cell attachment site motif lies at 642–644 (RGD).

In terms of assembly, binds to type I, II, and IV collagens. In terms of processing, gamma-carboxylation is controversial. Gamma-carboxyglutamated; gamma-carboxyglutamate residues are formed by vitamin K dependent carboxylation; this may be required for calcium binding. According to a more recent report, does not contain vitamin K-dependent gamma-carboxyglutamate residues. Post-translationally, the EMI domain contains 2 expected intradomain disulfide bridges (Cys-49-Cys85 and Cys-84-Cys-97) and one unusual interdomain disulfide bridge to the second FAS1 domain (Cys-74-Cys-339). This arrangement violates the predicted disulfide bridge pattern of an EMI domain. Expressed in heart, kidney, liver, skeletal muscle, testis, thyroid and uterus.

It is found in the secreted. The protein localises to the extracellular space. Its subcellular location is the extracellular matrix. Functionally, plays a role in cell adhesion. May play a role in cell-collagen interactions. The chain is Transforming growth factor-beta-induced protein ig-h3 (Tgfbi) from Mus musculus (Mouse).